Here is a 355-residue protein sequence, read N- to C-terminus: UDP-N-acetylglucosamine--N-acetylmuramyl-(pentapeptide) pyrophosphoryl-undecaprenol N-acetylglucosamine transferase (355 aa).

Residues 11–13 (TGG), Asn123, Arg162, Ser185, Ile239, 258–263 (ALTVSE), and Gln284 contribute to the UDP-N-acetyl-alpha-D-glucosamine site.

It belongs to the glycosyltransferase 28 family. MurG subfamily.

The protein resides in the cell inner membrane. The enzyme catalyses di-trans,octa-cis-undecaprenyl diphospho-N-acetyl-alpha-D-muramoyl-L-alanyl-D-glutamyl-meso-2,6-diaminopimeloyl-D-alanyl-D-alanine + UDP-N-acetyl-alpha-D-glucosamine = di-trans,octa-cis-undecaprenyl diphospho-[N-acetyl-alpha-D-glucosaminyl-(1-&gt;4)]-N-acetyl-alpha-D-muramoyl-L-alanyl-D-glutamyl-meso-2,6-diaminopimeloyl-D-alanyl-D-alanine + UDP + H(+). The protein operates within cell wall biogenesis; peptidoglycan biosynthesis. In terms of biological role, cell wall formation. Catalyzes the transfer of a GlcNAc subunit on undecaprenyl-pyrophosphoryl-MurNAc-pentapeptide (lipid intermediate I) to form undecaprenyl-pyrophosphoryl-MurNAc-(pentapeptide)GlcNAc (lipid intermediate II). This Hydrogenovibrio crunogenus (strain DSM 25203 / XCL-2) (Thiomicrospira crunogena) protein is UDP-N-acetylglucosamine--N-acetylmuramyl-(pentapeptide) pyrophosphoryl-undecaprenol N-acetylglucosamine transferase.